Consider the following 688-residue polypeptide: Glycine--tRNA ligase beta subunit (688 aa).

The protein belongs to the class-II aminoacyl-tRNA synthetase family. In terms of assembly, tetramer of two alpha and two beta subunits.

The protein localises to the cytoplasm. The enzyme catalyses tRNA(Gly) + glycine + ATP = glycyl-tRNA(Gly) + AMP + diphosphate. This Haemophilus influenzae (strain ATCC 51907 / DSM 11121 / KW20 / Rd) protein is Glycine--tRNA ligase beta subunit (glyS).